Consider the following 1128-residue polypeptide: Mastermind-like protein 2 (1128 aa).

Disordered stretches follow at residues Met-1–Leu-22 and Gln-81–Arg-167. Residues Gly-12 to Leu-22 are compositionally biased toward gly residues. The segment covering Pro-113 to Ala-122 has biased composition (low complexity). Position 177 is a phosphoserine (Ser-177). Disordered regions lie at residues Phe-343 to Gln-509, Ser-521 to Pro-649, Gln-677 to Asn-714, Gln-758 to Thr-794, and Gly-1039 to Asp-1073. Polar residues-rich tracts occupy residues Leu-347–Arg-357 and Gly-374–Pro-387. Residues Ser-395 to Ala-426 are compositionally biased toward low complexity. The span at Gln-431–Arg-446 shows a compositional bias: polar residues. 2 stretches are compositionally biased toward low complexity: residues His-453 to Pro-473 and Pro-484 to Ser-497. Residues Asn-566 to Pro-584 are compositionally biased toward polar residues. Positions Thr-590 to Pro-649 are enriched in low complexity. Composition is skewed to polar residues over residues Gln-677 to Gly-695, Asn-778 to Thr-794, and Gly-1039 to Pro-1052.

It belongs to the mastermind family. In terms of assembly, interacts through its N-terminal region with the ankyrin repeat region of the Notch proteins NOTCH1, NOTCH2, NOTCH3 and NOTCH4. Forms a DNA-binding complex with Notch proteins and RBPSUH/RBP-J kappa.

Its subcellular location is the nucleus speckle. Acts as a transcriptional coactivator for NOTCH proteins. Has been shown to amplify NOTCH-induced transcription of HES1. Potentiates activation by NOTCH3 and NOTCH4 more efficiently than MAML1 or MAML3. The chain is Mastermind-like protein 2 (MAML2) from Bos taurus (Bovine).